The primary structure comprises 332 residues: Glycerol-3-phosphate dehydrogenase [NAD(P)+] (332 aa).

Residues S11, F12, K32, and K106 each contribute to the NADPH site. Sn-glycerol 3-phosphate contacts are provided by K106, G137, and S139. A141 contacts NADPH. Sn-glycerol 3-phosphate contacts are provided by K192, D245, S255, R256, and N257. K192 functions as the Proton acceptor in the catalytic mechanism. R256 contacts NADPH. V280 and E282 together coordinate NADPH.

It belongs to the NAD-dependent glycerol-3-phosphate dehydrogenase family.

The protein localises to the cytoplasm. It carries out the reaction sn-glycerol 3-phosphate + NAD(+) = dihydroxyacetone phosphate + NADH + H(+). The catalysed reaction is sn-glycerol 3-phosphate + NADP(+) = dihydroxyacetone phosphate + NADPH + H(+). It functions in the pathway membrane lipid metabolism; glycerophospholipid metabolism. Its function is as follows. Catalyzes the reduction of the glycolytic intermediate dihydroxyacetone phosphate (DHAP) to sn-glycerol 3-phosphate (G3P), the key precursor for phospholipid synthesis. This Staphylococcus aureus (strain USA300) protein is Glycerol-3-phosphate dehydrogenase [NAD(P)+].